Reading from the N-terminus, the 370-residue chain is MAPEEKLPCELIEEILSRVPPESLVRFRTVSKKWNALFDDKMFINNHKMTFRFILATESKFYSVSMTPKIEVRELSLDIPGLELKPKILIDCNGFLLCGMEKEGIVVWNPWLRQAKWIKPKVNQPSLCFNGIGYEYDNMKLESSGYKTLVSYPNELDPTRSVWKIHDFASNSWKYTNLVMSCSSGVTLFGASVSLNGILYWVASHLKNNSLFVLVYYNFSNEKVYKFSDLPCGENHHHDVLVLRIFREDRLSLLKQCHLTKKIEIWVTKNKIRNCSSGDVDSAEWMNFMEVSTLNLPVLVHPSYFIDDKKLVVCSCDQTGQAWIYVVGDNKLISKIQIDSVVGPWPLHCSFFPSLVSIPRSQTKKAALQV.

The F-box domain occupies 1-47; that stretch reads MAPEEKLPCELIEEILSRVPPESLVRFRTVSKKWNALFDDKMFINNH.

The protein is Putative F-box protein At1g47390 of Arabidopsis thaliana (Mouse-ear cress).